A 51-amino-acid polypeptide reads, in one-letter code: uncharacterized protein (51 aa).

Residues 10-29 (LFLYHPLFLLLLYIYLVLFI) traverse the membrane as a helical segment.

It is found in the plastid. It localises to the chloroplast membrane. This is an uncharacterized protein from Anthoceros angustus (Hornwort).